A 105-amino-acid chain; its full sequence is MSNMKITNRFMLVATFIACVFISSMNMTVGKVIGYPGLKPDLPCDHHRYPSACAPSEQPVNPYRRGCSKIHRCRRDSPPAPISRKMLIRGQLIYNNAYNAYIQYP.

Positions 1-30 (MSNMKITNRFMLVATFIACVFISSMNMTVG) are cleaved as a signal peptide. Disulfide bonds link cysteine 44–cysteine 53 and cysteine 67–cysteine 73.

This sequence belongs to the plant rapid alkalinization factor (RALF) family. As to expression, expressed in seeds and rosettes.

It localises to the secreted. Its function is as follows. Cell signaling peptide that may regulate plant stress, growth, and development. Mediates a rapid alkalinization of extracellular space by mediating a transient increase in the cytoplasmic Ca(2+) concentration leading to a calcium-dependent signaling events through a cell surface receptor and a concomitant activation of some intracellular mitogen-activated protein kinases. In Arabidopsis thaliana (Mouse-ear cress), this protein is Protein RALF-like 21 (RALFL21).